Here is a 178-residue protein sequence, read N- to C-terminus: Ribosome maturation factor RimM (178 aa).

The 80-residue stretch at 99 to 178 (QGEFYWRDLI…EITVDWDPGF (80 aa)) folds into the PRC barrel domain.

This sequence belongs to the RimM family. Binds ribosomal protein uS19.

The protein resides in the cytoplasm. In terms of biological role, an accessory protein needed during the final step in the assembly of 30S ribosomal subunit, possibly for assembly of the head region. Essential for efficient processing of 16S rRNA. May be needed both before and after RbfA during the maturation of 16S rRNA. It has affinity for free ribosomal 30S subunits but not for 70S ribosomes. The sequence is that of Ribosome maturation factor RimM from Pseudoalteromonas translucida (strain TAC 125).